The following is a 530-amino-acid chain: Probable cytochrome P450 519A1 (530 aa).

A helical membrane pass occupies residues 1 to 21 (MESIINLIFYIIIFLILIDFL). Residue Cys-476 coordinates heme.

This sequence belongs to the cytochrome P450 family. Heme is required as a cofactor.

It localises to the membrane. This is Probable cytochrome P450 519A1 (cyp519A1) from Dictyostelium discoideum (Social amoeba).